A 321-amino-acid chain; its full sequence is uncharacterized protein (321 aa).

The N-terminal stretch at 1-22 (MKSIYKYTFMLFVFLFGTLMMA) is a signal peptide.

The protein belongs to the bacterial solute-binding protein 1 family. WtpA subfamily.

This is an uncharacterized protein from Petrotoga mobilis (strain DSM 10674 / SJ95).